The chain runs to 246 residues: Ureidoacrylate amidohydrolase RutB (246 aa).

The segment at 1 to 27 (MSAVTAAGYQAPQERSQSVTLPARPEP) is disordered. Residue Asp41 is the Proton acceptor of the active site. Lys150 is a catalytic residue. The Nucleophile role is filled by Cys183.

The protein belongs to the isochorismatase family. RutB subfamily.

It catalyses the reaction (Z)-3-ureidoacrylate + H2O + H(+) = (Z)-3-aminoacrylate + NH4(+) + CO2. It carries out the reaction (Z)-3-ureidoacrylate + H2O = (Z)-3-aminoacrylate + carbamate + H(+). The catalysed reaction is (Z)-2-methylureidoacrylate + H2O + H(+) = (Z)-2-methylaminoacrylate + NH4(+) + CO2. Its function is as follows. Hydrolyzes ureidoacrylate to form aminoacrylate and carbamate. The carbamate hydrolyzes spontaneously, thereby releasing one of the nitrogen atoms of the pyrimidine ring as ammonia and one of its carbon atoms as CO2. The chain is Ureidoacrylate amidohydrolase RutB from Rhizobium rhizogenes (strain K84 / ATCC BAA-868) (Agrobacterium radiobacter).